Consider the following 82-residue polypeptide: MVCIPCIVIPVLLWVYKKFLEPIVYPFISPIINRIWPRKAVQSASTSAKKEESNGTCKASGTSITNGSVSRGEEAVPDKKTD.

The interval 1–37 (MVCIPCIVIPVLLWVYKKFLEPIVYPFISPIINRIWP) is necessary for its localzation to the endoplasmic reticulum and lipid droplets. Residues 46-82 (TSAKKEESNGTCKASGTSITNGSVSRGEEAVPDKKTD) form a disordered region. The segment covering 54-69 (NGTCKASGTSITNGSV) has biased composition (polar residues). Residues 71 to 82 (RGEEAVPDKKTD) are compositionally biased toward basic and acidic residues.

This sequence belongs to the UPF0729 family.

It localises to the endoplasmic reticulum. Its subcellular location is the lipid droplet. This chain is UPF0729 protein C18orf32 homolog, found in Xenopus tropicalis (Western clawed frog).